Consider the following 663-residue polypeptide: UvrABC system protein B (663 aa).

The 389-residue stretch at 26–414 folds into the Helicase ATP-binding domain; it reads DGLESGLAKQ…DNVAEQVVRP (389 aa). 39–46 is a binding site for ATP; sequence GVTGSGKT. The Beta-hairpin motif lies at 92–115; the sequence is YYDYYQPEAYVPASDTFIEKDASI. Residues 430 to 596 enclose the Helicase C-terminal domain; sequence QVDDLMSEIR…GINKSVEDIL (167 aa). In terms of domain architecture, UVR spans 624–659; the sequence is AKEINALEKQMYAHAQNMEFELAAKIRDEYLLLKEQ.

The protein belongs to the UvrB family. As to quaternary structure, forms a heterotetramer with UvrA during the search for lesions. Interacts with UvrC in an incision complex.

Its subcellular location is the cytoplasm. In terms of biological role, the UvrABC repair system catalyzes the recognition and processing of DNA lesions. A damage recognition complex composed of 2 UvrA and 2 UvrB subunits scans DNA for abnormalities. Upon binding of the UvrA(2)B(2) complex to a putative damaged site, the DNA wraps around one UvrB monomer. DNA wrap is dependent on ATP binding by UvrB and probably causes local melting of the DNA helix, facilitating insertion of UvrB beta-hairpin between the DNA strands. Then UvrB probes one DNA strand for the presence of a lesion. If a lesion is found the UvrA subunits dissociate and the UvrB-DNA preincision complex is formed. This complex is subsequently bound by UvrC and the second UvrB is released. If no lesion is found, the DNA wraps around the other UvrB subunit that will check the other stand for damage. This is UvrABC system protein B from Legionella pneumophila (strain Paris).